The primary structure comprises 156 residues: ATP synthase subunit b (156 aa).

A helical membrane pass occupies residues 7–27 (LIGQTVAFIIFVWFCMKFVWP).

This sequence belongs to the ATPase B chain family. In terms of assembly, F-type ATPases have 2 components, F(1) - the catalytic core - and F(0) - the membrane proton channel. F(1) has five subunits: alpha(3), beta(3), gamma(1), delta(1), epsilon(1). F(0) has three main subunits: a(1), b(2) and c(10-14). The alpha and beta chains form an alternating ring which encloses part of the gamma chain. F(1) is attached to F(0) by a central stalk formed by the gamma and epsilon chains, while a peripheral stalk is formed by the delta and b chains.

It localises to the cell inner membrane. Its function is as follows. F(1)F(0) ATP synthase produces ATP from ADP in the presence of a proton or sodium gradient. F-type ATPases consist of two structural domains, F(1) containing the extramembraneous catalytic core and F(0) containing the membrane proton channel, linked together by a central stalk and a peripheral stalk. During catalysis, ATP synthesis in the catalytic domain of F(1) is coupled via a rotary mechanism of the central stalk subunits to proton translocation. Component of the F(0) channel, it forms part of the peripheral stalk, linking F(1) to F(0). This chain is ATP synthase subunit b, found in Shewanella sp. (strain MR-4).